A 417-amino-acid polypeptide reads, in one-letter code: Spermidine/putrescine import ATP-binding protein PotA (417 aa).

One can recognise an ABC transporter domain in the interval 5-308 (IILKDLTKVF…PANRFVAQFV (304 aa)). 37 to 44 (GPSGCGKT) contributes to the ATP binding site. The segment at 105–177 (DFNSKIKDNL…TALKCKKINK (73 aa)) is insert.

The protein belongs to the ABC transporter superfamily. Spermidine/putrescine importer (TC 3.A.1.11.1) family. In terms of assembly, the complex is composed of two ATP-binding proteins (PotA), two transmembrane proteins (PotB and PotC) and a solute-binding protein (PotD).

The protein localises to the cell membrane. The catalysed reaction is ATP + H2O + polyamine-[polyamine-binding protein]Side 1 = ADP + phosphate + polyamineSide 2 + [polyamine-binding protein]Side 1.. Part of the ABC transporter complex PotABCD involved in spermidine/putrescine import. Responsible for energy coupling to the transport system. The polypeptide is Spermidine/putrescine import ATP-binding protein PotA (Aster yellows witches'-broom phytoplasma (strain AYWB)).